A 109-amino-acid polypeptide reads, in one-letter code: uncharacterized protein (109 aa).

The N-terminal stretch at Met-1 to Gly-21 is a signal peptide.

In terms of tissue distribution, prismatic layer of shell (at protein level). Expressed primarily in the mantle with highest level in the mantle edge and lower level in the mantle pallium.

It is found in the secreted. This is an uncharacterized protein from Margaritifera margaritifera (Freshwater pearl mussel).